We begin with the raw amino-acid sequence, 257 residues long: Hydroxyethylthiazole kinase (257 aa).

Met42 is a binding site for substrate. Arg117 and Thr163 together coordinate ATP. Ala190 contacts substrate.

This sequence belongs to the Thz kinase family. It depends on Mg(2+) as a cofactor.

The catalysed reaction is 5-(2-hydroxyethyl)-4-methylthiazole + ATP = 4-methyl-5-(2-phosphooxyethyl)-thiazole + ADP + H(+). The protein operates within cofactor biosynthesis; thiamine diphosphate biosynthesis; 4-methyl-5-(2-phosphoethyl)-thiazole from 5-(2-hydroxyethyl)-4-methylthiazole: step 1/1. Its function is as follows. Catalyzes the phosphorylation of the hydroxyl group of 4-methyl-5-beta-hydroxyethylthiazole (THZ). This Roseobacter denitrificans (strain ATCC 33942 / OCh 114) (Erythrobacter sp. (strain OCh 114)) protein is Hydroxyethylthiazole kinase.